Reading from the N-terminus, the 272-residue chain is Shikimate dehydrogenase (NADP(+)) (272 aa).

Residues 19–21 (SLS) and T66 each bind shikimate. K70 acts as the Proton acceptor in catalysis. Residue E82 participates in NADP(+) binding. N91 and D106 together coordinate shikimate. NADP(+) contacts are provided by residues 129–133 (GAGGA), 151–156 (NRTPEK), and I214. Shikimate is bound at residue Y216. NADP(+) is bound at residue G237.

Belongs to the shikimate dehydrogenase family. Homodimer.

It catalyses the reaction shikimate + NADP(+) = 3-dehydroshikimate + NADPH + H(+). The protein operates within metabolic intermediate biosynthesis; chorismate biosynthesis; chorismate from D-erythrose 4-phosphate and phosphoenolpyruvate: step 4/7. In terms of biological role, involved in the biosynthesis of the chorismate, which leads to the biosynthesis of aromatic amino acids. Catalyzes the reversible NADPH linked reduction of 3-dehydroshikimate (DHSA) to yield shikimate (SA). The protein is Shikimate dehydrogenase (NADP(+)) of Thermococcus kodakarensis (strain ATCC BAA-918 / JCM 12380 / KOD1) (Pyrococcus kodakaraensis (strain KOD1)).